A 781-amino-acid chain; its full sequence is MAAALLLLRALRQSPEPGPWRLWAQLSGRSPGLFSGAGGRRPYVVRGTPIGLAAAGGHTPQSLLLRILTPSFEGVSGLLLKRHIVPSAIRLWQLSGSTLYFNTSGLKQKNKDDDKPKGKAPEDDEEERRRKEREDQMYRERLRTLFIIAIVMSLLNSLSTSGGSISWADFVNEMLAKGEVQRVQVVPESDVVEVYLHPGAVVFGRPRLALMYRMQVANIDKFEEKLRAAEDELNIESKDRIPVSYKRTGFFGNALYALGMTAVGLAILWYVFRLAGMTGREGGFSAFNQLKMARFTIVDGKTGKGVSFQDVAGMHEAKLEVREFVDYLKSPERFLQLGAKVPKGALLLGPPGCGKTLLAKAVATEAQVPFLAMAGPEFVEVIGGLGAARVRSLFKEARARAPCIVYIDEIDAVGKKRSTSMSGFSNTEEEQTLNQLLVEMDGMGTADHVIVLASTNRADVLDNALMRPGRLDRHVFIDLPTLQERREIFEQHLKGLKLTQPSSFYSQRLAELTPGFSGADIANICNEAALHAAREGHTSVHTFNFEYAVERVIAGTAKKSKILSKEEQRVVAFHESGHALVGWLLEHTEAVMKVSIAPRTNAALGFSQMLPRDQYLFTKEQLFERMCMALGGRAAEAISFSRVTSGAQDDLRKVTRIAYSMVKQFGMAPSIGPVSFPEAQEGLVGIGRRPFSQGLQQMMDHEARLLVARAYRHTEKVLLDNLDKLQALANALLEKEVINYEDIEALIGPPPHGPKKMIAPQKWIDAEKEKQASGEEEAPAP.

Residues 1-43 constitute a mitochondrion transit peptide; it reads MAAALLLLRALRQSPEPGPWRLWAQLSGRSPGLFSGAGGRRPY. Positions 44–105 are cleaved as a propeptide — removed in mature form; the sequence is VVRGTPIGLA…GSTLYFNTSG (62 aa). The disordered stretch occupies residues 105-134; that stretch reads GLKQKNKDDDKPKGKAPEDDEEERRRKERE. The Mitochondrial matrix segment spans residues 106–144; sequence LKQKNKDDDKPKGKAPEDDEEERRRKEREDQMYRERLRT. Residues 109 to 134 are compositionally biased toward basic and acidic residues; sequence KNKDDDKPKGKAPEDDEEERRRKERE. The helical transmembrane segment at 145–165 threads the bilayer; it reads LFIIAIVMSLLNSLSTSGGSI. Residues 166–248 lie on the Mitochondrial intermembrane side of the membrane; the sequence is SWADFVNEML…DRIPVSYKRT (83 aa). A helical transmembrane segment spans residues 249–269; sequence GFFGNALYALGMTAVGLAILW. The Mitochondrial matrix segment spans residues 270-781; that stretch reads YVFRLAGMTG…ASGEEEAPAP (512 aa). ATP is bound by residues alanine 312, glycine 352, cysteine 353, glycine 354, lysine 355, threonine 356, and leucine 357. The residue at position 505 (tyrosine 505) is a 3'-nitrotyrosine. Histidine 574 contacts Zn(2+). Residue glutamate 575 is part of the active site. Residues histidine 578 and aspartate 650 each coordinate Zn(2+). An interaction with PPIF region spans residues 701–781; it reads HEARLLVARA…ASGEEEAPAP (81 aa).

The protein in the N-terminal section; belongs to the AAA ATPase family. It in the C-terminal section; belongs to the peptidase M41 family. Forms heterooligomers with AFG3L2; the m-AAA protease is composed of heterohexamers of AFG3L2 and SPG7. Component of the mitochondrial permeability transition pore complex (mPTPC), at least composed of SPG7, VDAC1 and PPIF. Interacts with MAIP1. Zn(2+) serves as cofactor. Post-translationally, upon import into the mitochondrion, the N-terminal transit peptide is cleaved by the mitochondrial-processing peptidase (MPP) to generate an intermediate form which undergoes a second proteolytic cleavage mediated by proteases AFG3L2 removing an additional N-terminal fragment to generate the proteolytically active mature form.

The protein localises to the mitochondrion inner membrane. It carries out the reaction ATP + H2O = ADP + phosphate + H(+). In terms of biological role, catalytic component of the m-AAA protease, a protease that plays a key role in proteostasis of inner mitochondrial membrane proteins, and which is essential for axonal and neuron development. SPG7 possesses both ATPase and protease activities: the ATPase activity is required to unfold substrates, threading them into the internal proteolytic cavity for hydrolysis into small peptide fragments. The m-AAA protease exerts a dual role in the mitochondrial inner membrane: it mediates the processing of specific regulatory proteins and ensures protein quality control by degrading misfolded polypeptides. Mediates protein maturation of the mitochondrial ribosomal subunit MRPL32/bL32m by catalyzing the cleavage of the presequence of MRPL32/bL32m prior to assembly into the mitochondrial ribosome. Acts as a regulator of calcium in neurons by mediating degradation of SMDT1/EMRE before its assembly with the uniporter complex, limiting the availability of SMDT1/EMRE for MCU assembly and promoting efficient assembly of gatekeeper subunits with MCU. Also regulates mitochondrial calcium by catalyzing degradation of MCU. Plays a role in the formation and regulation of the mitochondrial permeability transition pore (mPTP) and its proteolytic activity is dispensable for this function. This is Mitochondrial inner membrane m-AAA protease component paraplegin (Spg7) from Rattus norvegicus (Rat).